The sequence spans 224 residues: C-&gt;U-editing enzyme APOBEC-2 (224 aa).

The interval 1-23 (MAQKEEAAEAAAPASQNGDDLEN) is disordered. Zn(2+) contacts are provided by glutamate 60 and histidine 98. Residues 64-169 (GRNKTFLCYV…PEVQAALKKL (106 aa)) enclose the CMP/dCMP-type deaminase domain. Glutamate 100 (proton donor) is an active-site residue. 2 residues coordinate Zn(2+): cysteine 128 and cysteine 131.

This sequence belongs to the cytidine and deoxycytidylate deaminase family. Homotetramer. Requires Zn(2+) as cofactor. In terms of tissue distribution, expressed exclusively in heart and skeletal muscle.

It catalyses the reaction cytidine(6666) in apoB mRNA + H2O + H(+) = uridine(6666) in apoB mRNA + NH4(+). Probable C to U editing enzyme whose physiological substrate is not yet known. Does not display detectable apoB mRNA editing. Has a low intrinsic cytidine deaminase activity. May play a role in the epigenetic regulation of gene expression through the process of active DNA demethylation. The polypeptide is C-&gt;U-editing enzyme APOBEC-2 (Apobec2) (Mus musculus (Mouse)).